We begin with the raw amino-acid sequence, 491 residues long: Aspartyl/glutamyl-tRNA(Asn/Gln) amidotransferase subunit B (491 aa).

This sequence belongs to the GatB/GatE family. GatB subfamily. In terms of assembly, heterotrimer of A, B and C subunits.

The enzyme catalyses L-glutamyl-tRNA(Gln) + L-glutamine + ATP + H2O = L-glutaminyl-tRNA(Gln) + L-glutamate + ADP + phosphate + H(+). It catalyses the reaction L-aspartyl-tRNA(Asn) + L-glutamine + ATP + H2O = L-asparaginyl-tRNA(Asn) + L-glutamate + ADP + phosphate + 2 H(+). Its function is as follows. Allows the formation of correctly charged Asn-tRNA(Asn) or Gln-tRNA(Gln) through the transamidation of misacylated Asp-tRNA(Asn) or Glu-tRNA(Gln) in organisms which lack either or both of asparaginyl-tRNA or glutaminyl-tRNA synthetases. The reaction takes place in the presence of glutamine and ATP through an activated phospho-Asp-tRNA(Asn) or phospho-Glu-tRNA(Gln). The protein is Aspartyl/glutamyl-tRNA(Asn/Gln) amidotransferase subunit B of Nostoc sp. (strain PCC 7120 / SAG 25.82 / UTEX 2576).